The following is a 112-amino-acid chain: uncharacterized protein (112 aa).

3 residues coordinate Fe cation: cysteine 39, cysteine 105, and cysteine 107.

This sequence belongs to the HesB/IscA family. Ycf83 subfamily.

The protein localises to the plastid. It localises to the chloroplast. This is an uncharacterized protein from Galdieria sulphuraria (Red alga).